The sequence spans 219 residues: Ion-translocating oxidoreductase complex subunit G (219 aa).

The helical transmembrane segment at 25-45 (GLLLGLFSLVSALMLALASDA) threads the bilayer. T187 carries the FMN phosphoryl threonine modification.

It belongs to the RnfG family. As to quaternary structure, the complex is composed of six subunits: RnfA, RnfB, RnfC, RnfD, RnfE and RnfG. Requires FMN as cofactor.

The protein localises to the cellular chromatophore membrane. Functionally, part of a membrane-bound complex that couples electron transfer with translocation of ions across the membrane. The protein is Ion-translocating oxidoreductase complex subunit G of Cereibacter sphaeroides (strain ATCC 17023 / DSM 158 / JCM 6121 / CCUG 31486 / LMG 2827 / NBRC 12203 / NCIMB 8253 / ATH 2.4.1.) (Rhodobacter sphaeroides).